The primary structure comprises 611 residues: CRS2-associated factor 2, chloroplastic (611 aa).

Residues methionine 1–serine 58 constitute a chloroplast transit peptide. A disordered region spans residues methionine 1–threonine 72. The span at glutamine 55–threonine 72 shows a compositional bias: polar residues. CRM domains are found at residues glutamate 232–arginine 328 and aspartate 350–proline 446. The interval lysine 486–asparagine 509 is CRS2 binding. The disordered stretch occupies residues methionine 554–aspartate 578.

Interacts with CRS2 and RNA. Part of large ribonucleo-protein complexes that include group IIB introns, CRS2 and CAF2.

Its subcellular location is the plastid. It localises to the chloroplast stroma. Functionally, required for the splicing of group IIB introns in chloroplasts. Forms splicing particles with CRS2. Interacts with RNA and confers intron specificity of the splicing particles. This chain is CRS2-associated factor 2, chloroplastic (CAF2), found in Zea mays (Maize).